Here is a 280-residue protein sequence, read N- to C-terminus: uncharacterized protein (280 aa).

Disordered regions lie at residues 1–124 and 177–280; these read MPRD…QREA and LEEE…LSSK. Composition is skewed to basic residues over residues 16-36 and 48-83; these read SRRR…RSRR and YSRR…RQKS. 2 stretches are compositionally biased toward basic and acidic residues: residues 102 to 124 and 182 to 259; these read AKNR…QREA and EASL…ERLK.

This is an uncharacterized protein from Arabidopsis thaliana (Mouse-ear cress).